The chain runs to 419 residues: MDQFVIQGGTSLAGEVTISGAKNAALPILFAALLADGKSTFTNVPRLRDIVTTEALLKTLGASVNWQGDTLVIDGATVDKTLAPYDLVKQMRASVLTLGPLVARFGEAQVSLPGGCAIGARPVDIHIQGLERMGAQINVENGYINAKVNGRLKGAEIFMEMVSVGATENLLMAATLADGKTVLENAACEPEITDLANCLIAMGAKITGAGTNRIEIEGVERLAGCEHRILPDRIETGTFLVAAAMAGGEVLCKMTDFHSLEPVIEKLRATNALLEVHDNSIYLDMRGRELKAVNIKTAPHPGFPTDMQAQFTALNVVANGSATITETIFENRFMHVPELQRMGANIRLEGNTAICGDTKTLSGAQVMATDLRASASLILTGIVAQGETIVDRIYHVDRGYERIEDKLSALGANIKRRSS.

Residue 22-23 participates in phosphoenolpyruvate binding; it reads KN. R92 contacts UDP-N-acetyl-alpha-D-glucosamine. The active-site Proton donor is C116. The residue at position 116 (C116) is a 2-(S-cysteinyl)pyruvic acid O-phosphothioketal. UDP-N-acetyl-alpha-D-glucosamine-binding residues include D306 and I328.

This sequence belongs to the EPSP synthase family. MurA subfamily.

It is found in the cytoplasm. The enzyme catalyses phosphoenolpyruvate + UDP-N-acetyl-alpha-D-glucosamine = UDP-N-acetyl-3-O-(1-carboxyvinyl)-alpha-D-glucosamine + phosphate. The protein operates within cell wall biogenesis; peptidoglycan biosynthesis. Its function is as follows. Cell wall formation. Adds enolpyruvyl to UDP-N-acetylglucosamine. In Pseudoalteromonas translucida (strain TAC 125), this protein is UDP-N-acetylglucosamine 1-carboxyvinyltransferase.